Reading from the N-terminus, the 131-residue chain is Small ribosomal subunit protein uS12 (131 aa).

Aspartate 89 is modified (3-methylthioaspartic acid).

It belongs to the universal ribosomal protein uS12 family. Part of the 30S ribosomal subunit. Contacts proteins S8 and S17. May interact with IF1 in the 30S initiation complex.

In terms of biological role, with S4 and S5 plays an important role in translational accuracy. Functionally, interacts with and stabilizes bases of the 16S rRNA that are involved in tRNA selection in the A site and with the mRNA backbone. Located at the interface of the 30S and 50S subunits, it traverses the body of the 30S subunit contacting proteins on the other side and probably holding the rRNA structure together. The combined cluster of proteins S8, S12 and S17 appears to hold together the shoulder and platform of the 30S subunit. The protein is Small ribosomal subunit protein uS12 of Karelsulcia muelleri (strain GWSS) (Sulcia muelleri).